A 165-amino-acid polypeptide reads, in one-letter code: Transcriptional repressor NrdR (165 aa).

Residues 3–34 (CPFCGAQDTRVVDSRLSHEGDQVRRRRECGEC) fold into a zinc finger. Residues 49-139 (PRVVKSDGSR…VYRRFEDVNQ (91 aa)) form the ATP-cone domain.

It belongs to the NrdR family. Zn(2+) serves as cofactor.

In terms of biological role, negatively regulates transcription of bacterial ribonucleotide reductase nrd genes and operons by binding to NrdR-boxes. This Methylococcus capsulatus (strain ATCC 33009 / NCIMB 11132 / Bath) protein is Transcriptional repressor NrdR.